Consider the following 355-residue polypeptide: MSFSDNLAKILDKYENLGKKLSSGIMGDEFVKASKEYAELEDVVAKIKEYNKAKSELEEANNFKLEVGLDNATLEMIEDEIHTLENSLPKLERAVKIALLPKDDADSKSAIIEVRAGSGGEEAALFAAVLFNMYQRYAELKGWRFEILAISDTGIGGYKEASASIKGKDVFSKLKFESGVHRVQRVPETESQGRIHTSAATVAVLPEAEEVDIKIEDKDLRIDTYRASGAGGQHVNTTDSAVRITHIPTGITVALQDEKSQHKNKAKALKILRARIYEEERRKKEQERADSRRGQVGSGDRSERIRTYNFPQGRVSDHRINLTLYKIDEVVKNGQLDEFVEALIADDEAKKLSEI.

An N5-methylglutamine modification is found at Gln-233. A compositionally biased stretch (basic and acidic residues) spans 280–293 (ERRKKEQERADSRR). Residues 280–308 (ERRKKEQERADSRRGQVGSGDRSERIRTY) are disordered.

It belongs to the prokaryotic/mitochondrial release factor family. Methylated by PrmC. Methylation increases the termination efficiency of RF1.

It localises to the cytoplasm. In terms of biological role, peptide chain release factor 1 directs the termination of translation in response to the peptide chain termination codons UAG and UAA. The chain is Peptide chain release factor 1 from Rickettsia felis (strain ATCC VR-1525 / URRWXCal2) (Rickettsia azadi).